The primary structure comprises 303 residues: Taste receptor type 2 member 13 (303 aa).

The Extracellular portion of the chain corresponds to 1-7 (MESALPS). Residues 8–28 (ILTLVIIAEFIIGNLSNGFIV) form a helical membrane-spanning segment. The Cytoplasmic segment spans residues 29–55 (LINYIDWVSKRELSSVDKLLIILAISR). The helical transmembrane segment at 56-76 (IGLIWEILVSWFLALHYLAIF) threads the bilayer. The Extracellular segment spans residues 77 to 85 (VSGTGLRIM). The helical transmembrane segment at 86–106 (IFSWIVSNHFSLWLATILSIF) threads the bilayer. Over 107 to 128 (YLLKIASFSSPAFLYLKWRVNK) the chain is Cytoplasmic. A helical membrane pass occupies residues 129–149 (VILMILLGSLVFLFLNLIQIN). Residues 150–184 (IHIKDWLDRYEGNTTWNFSMSDFVTFSVSVKFTMT) lie on the Extracellular side of the membrane. Asn162 and Asn166 each carry an N-linked (GlcNAc...) asparagine glycan. Residues 185–205 (MFSLTPFTVALISFSLLIFSL) form a helical membrane-spanning segment. The Cytoplasmic portion of the chain corresponds to 206–232 (QKHLQKMQLNYKGHREPRTKVHTNALK). A helical transmembrane segment spans residues 233–253 (IVISFLLLYASFFLCILISWI). Residues 254–261 (SELYQNTA) lie on the Extracellular side of the membrane. Residues 262 to 282 (IYMLCETIGLFYPSSHSFLLI) traverse the membrane as a helical segment. Residues 283-303 (LGNPKLRQAFLLVAAKVWAKR) are Cytoplasmic-facing.

Belongs to the G-protein coupled receptor T2R family.

It is found in the membrane. In terms of biological role, receptor that may play a role in the perception of bitterness and is gustducin-linked. May play a role in sensing the chemical composition of the gastrointestinal content. The activity of this receptor may stimulate alpha gustducin, mediate PLC-beta-2 activation and lead to the gating of TRPM5. The sequence is that of Taste receptor type 2 member 13 (TAS2R13) from Pongo pygmaeus (Bornean orangutan).